The sequence spans 121 residues: Cytochrome B5-like protein (121 aa).

Residues 1–21 (MIAVIGLLLGFLVSALFLIQG) form a helical membrane-spanning segment. Residues 24-49 (RRTNDNQEKKRSSSEPVEDVVRPKSY) form a disordered region. Basic and acidic residues predominate over residues 26 to 36 (TNDNQEKKRSS). The region spanning 46–121 (PKSYSKSEVA…IEDFYIGELH (76 aa)) is the Cytochrome b5 heme-binding domain. Residues H81 and H104 each coordinate heme.

This sequence belongs to the cytochrome b5 family.

Its subcellular location is the membrane. This chain is Cytochrome B5-like protein, found in Arabidopsis thaliana (Mouse-ear cress).